The primary structure comprises 100 residues: Small ribosomal subunit protein uS14c (100 aa).

The protein belongs to the universal ribosomal protein uS14 family. Part of the 30S ribosomal subunit.

The protein localises to the plastid. It is found in the chloroplast. Its function is as follows. Binds 16S rRNA, required for the assembly of 30S particles. In Chara vulgaris (Common stonewort), this protein is Small ribosomal subunit protein uS14c.